Consider the following 440-residue polypeptide: Ribulose bisphosphate carboxylase large chain (440 aa).

Lys3 bears the N6,N6,N6-trimethyllysine mark. Substrate-binding residues include Asn112 and Thr162. The active-site Proton acceptor is Lys164. Substrate is bound at residue Lys166. Residues Lys190, Asp192, and Glu193 each contribute to the Mg(2+) site. N6-carboxylysine is present on Lys190. Catalysis depends on His283, which acts as the Proton acceptor. Substrate contacts are provided by Arg284, His316, and Ser368.

Belongs to the RuBisCO large chain family. Type I subfamily. Heterohexadecamer of 8 large chains and 8 small chains; disulfide-linked. The disulfide link is formed within the large subunit homodimers. Mg(2+) is required as a cofactor. The disulfide bond which can form in the large chain dimeric partners within the hexadecamer appears to be associated with oxidative stress and protein turnover.

Its subcellular location is the plastid. The protein resides in the chloroplast. It catalyses the reaction 2 (2R)-3-phosphoglycerate + 2 H(+) = D-ribulose 1,5-bisphosphate + CO2 + H2O. The catalysed reaction is D-ribulose 1,5-bisphosphate + O2 = 2-phosphoglycolate + (2R)-3-phosphoglycerate + 2 H(+). RuBisCO catalyzes two reactions: the carboxylation of D-ribulose 1,5-bisphosphate, the primary event in carbon dioxide fixation, as well as the oxidative fragmentation of the pentose substrate in the photorespiration process. Both reactions occur simultaneously and in competition at the same active site. The sequence is that of Ribulose bisphosphate carboxylase large chain from Bambusa multiplex (Hedge bamboo).